Reading from the N-terminus, the 384-residue chain is Carbamoyl phosphate synthase small chain (384 aa).

The interval 1 to 189 (MSKSALLVLE…GLPEAKDDSE (189 aa)) is CPSase. The L-glutamine site is built by Ser-47, Gly-241, and Gly-243. Positions 193–380 (HVVAYDFGAK…IELIKLSVNE (188 aa)) constitute a Glutamine amidotransferase type-1 domain. Cys-269 functions as the Nucleophile in the catalytic mechanism. L-glutamine-binding residues include Leu-270, Gln-273, Asn-311, Gly-313, and Phe-314. Catalysis depends on residues His-353 and Glu-355.

Belongs to the CarA family. In terms of assembly, composed of two chains; the small (or glutamine) chain promotes the hydrolysis of glutamine to ammonia, which is used by the large (or ammonia) chain to synthesize carbamoyl phosphate. Tetramer of heterodimers (alpha,beta)4.

It catalyses the reaction hydrogencarbonate + L-glutamine + 2 ATP + H2O = carbamoyl phosphate + L-glutamate + 2 ADP + phosphate + 2 H(+). The enzyme catalyses L-glutamine + H2O = L-glutamate + NH4(+). It functions in the pathway amino-acid biosynthesis; L-arginine biosynthesis; carbamoyl phosphate from bicarbonate: step 1/1. It participates in pyrimidine metabolism; UMP biosynthesis via de novo pathway; (S)-dihydroorotate from bicarbonate: step 1/3. In terms of biological role, small subunit of the glutamine-dependent carbamoyl phosphate synthetase (CPSase). CPSase catalyzes the formation of carbamoyl phosphate from the ammonia moiety of glutamine, carbonate, and phosphate donated by ATP, constituting the first step of 2 biosynthetic pathways, one leading to arginine and/or urea and the other to pyrimidine nucleotides. The small subunit (glutamine amidotransferase) binds and cleaves glutamine to supply the large subunit with the substrate ammonia. This chain is Carbamoyl phosphate synthase small chain, found in Photobacterium profundum (strain SS9).